The chain runs to 211 residues: Probable nicotinate-nucleotide adenylyltransferase (211 aa).

The protein belongs to the NadD family.

It carries out the reaction nicotinate beta-D-ribonucleotide + ATP + H(+) = deamido-NAD(+) + diphosphate. Its pathway is cofactor biosynthesis; NAD(+) biosynthesis; deamido-NAD(+) from nicotinate D-ribonucleotide: step 1/1. Functionally, catalyzes the reversible adenylation of nicotinate mononucleotide (NaMN) to nicotinic acid adenine dinucleotide (NaAD). This chain is Probable nicotinate-nucleotide adenylyltransferase, found in Legionella pneumophila (strain Paris).